Reading from the N-terminus, the 162-residue chain is Larval cuticle protein F1 (162 aa).

4 consecutive repeat copies span residues 27-30 (AAPV), 43-46 (AAPV), 59-62 (AAPV), and 75-78 (AAPA).

Component of the larval cuticle. The chain is Larval cuticle protein F1 from Tenebrio molitor (Yellow mealworm beetle).